Reading from the N-terminus, the 479-residue chain is Proline--tRNA ligase (479 aa).

It belongs to the class-II aminoacyl-tRNA synthetase family. ProS type 3 subfamily. Homodimer.

The protein localises to the cytoplasm. It carries out the reaction tRNA(Pro) + L-proline + ATP = L-prolyl-tRNA(Pro) + AMP + diphosphate. Functionally, catalyzes the attachment of proline to tRNA(Pro) in a two-step reaction: proline is first activated by ATP to form Pro-AMP and then transferred to the acceptor end of tRNA(Pro). The chain is Proline--tRNA ligase from Mesomycoplasma hyopneumoniae (strain J / ATCC 25934 / NCTC 10110) (Mycoplasma hyopneumoniae).